A 342-amino-acid polypeptide reads, in one-letter code: Ferredoxin--NADP reductase (342 aa).

FAD contacts are provided by cysteine 17, aspartate 36, glutamine 44, tyrosine 49, valine 89, phenylalanine 124, aspartate 289, and threonine 330.

The protein belongs to the ferredoxin--NADP reductase type 2 family. In terms of assembly, homodimer. FAD serves as cofactor.

The catalysed reaction is 2 reduced [2Fe-2S]-[ferredoxin] + NADP(+) + H(+) = 2 oxidized [2Fe-2S]-[ferredoxin] + NADPH. The chain is Ferredoxin--NADP reductase from Rhodopseudomonas palustris (strain ATCC BAA-98 / CGA009).